The following is a 271-amino-acid chain: Cytochrome b termination protein 1 (271 aa).

The protein resides in the mitochondrion. In terms of biological role, involved in 5'-end processing of mitochondrial COB, 15S rRNA, and RPM1 transcript. May also have a role in 3'-end processing of the COB pre-mRNA. This Saccharomyces cerevisiae (strain ATCC 204508 / S288c) (Baker's yeast) protein is Cytochrome b termination protein 1 (CBT1).